Consider the following 226-residue polypeptide: Ribose-5-phosphate isomerase A (226 aa).

Residues 32 to 35, 85 to 88, and 98 to 101 each bind substrate; these read TGST, DGAD, and KGGG. Catalysis depends on Glu-107, which acts as the Proton acceptor. Lys-125 is a binding site for substrate.

It belongs to the ribose 5-phosphate isomerase family. In terms of assembly, homodimer.

It catalyses the reaction aldehydo-D-ribose 5-phosphate = D-ribulose 5-phosphate. Its pathway is carbohydrate degradation; pentose phosphate pathway; D-ribose 5-phosphate from D-ribulose 5-phosphate (non-oxidative stage): step 1/1. In terms of biological role, catalyzes the reversible conversion of ribose-5-phosphate to ribulose 5-phosphate. This chain is Ribose-5-phosphate isomerase A, found in Saccharophagus degradans (strain 2-40 / ATCC 43961 / DSM 17024).